The chain runs to 443 residues: Xaa-Pro dipeptidase (443 aa).

Aspartate 246, aspartate 257, histidine 339, glutamate 384, and glutamate 423 together coordinate Mn(2+).

It belongs to the peptidase M24B family. Bacterial-type prolidase subfamily. Mn(2+) is required as a cofactor.

The enzyme catalyses Xaa-L-Pro dipeptide + H2O = an L-alpha-amino acid + L-proline. Functionally, splits dipeptides with a prolyl residue in the C-terminal position. The sequence is that of Xaa-Pro dipeptidase from Cronobacter sakazakii (strain ATCC BAA-894) (Enterobacter sakazakii).